A 177-amino-acid polypeptide reads, in one-letter code: Nucleoside triphosphate/diphosphate phosphatase (177 aa).

The active-site Proton donor is Arg23. Residues Asn87, Asp103, Asp105, Asp107, Asp120, and Glu123 each coordinate Mg(2+).

Belongs to the Ntdp family. The cofactor is Mg(2+).

The catalysed reaction is a ribonucleoside 5'-triphosphate + H2O = a ribonucleoside 5'-diphosphate + phosphate + H(+). It carries out the reaction a ribonucleoside 5'-diphosphate + H2O = a ribonucleoside 5'-phosphate + phosphate + H(+). Its function is as follows. Has nucleoside phosphatase activity towards nucleoside triphosphates and nucleoside diphosphates. This is Nucleoside triphosphate/diphosphate phosphatase from Enterococcus faecalis (strain ATCC 700802 / V583).